Reading from the N-terminus, the 119-residue chain is Holo-[acyl-carrier-protein] synthase (119 aa).

Mg(2+) contacts are provided by aspartate 8 and glutamate 60.

Belongs to the P-Pant transferase superfamily. AcpS family. Mg(2+) is required as a cofactor.

The protein resides in the cytoplasm. It carries out the reaction apo-[ACP] + CoA = holo-[ACP] + adenosine 3',5'-bisphosphate + H(+). Functionally, transfers the 4'-phosphopantetheine moiety from coenzyme A to a Ser of acyl-carrier-protein. This is Holo-[acyl-carrier-protein] synthase from Staphylococcus haemolyticus (strain JCSC1435).